Consider the following 412-residue polypeptide: Probable serine/threonine-protein kinase PBL10 (412 aa).

Residue G2 is the site of N-myristoyl glycine attachment. C4 carries S-palmitoyl cysteine lipidation. The interval 15-45 is disordered; sequence GASPKYMSSEANDSLGSKSSSVSIRTNPRTE. Polar residues predominate over residues 23 to 43; it reads SEANDSLGSKSSSVSIRTNPR. Residue T58 is modified to Phosphothreonine. In terms of domain architecture, Protein kinase spans 69-356; it reads FRPDSVLGEG…VVSHLEHIQT (288 aa). Residues 75–83 and K107 each bind ATP; that span reads LGEGGFGSV. Position 152 is a phosphotyrosine (Y152). Catalysis depends on D204, which acts as the Proton acceptor. Residues S208 and S238 each carry the phosphoserine modification. 2 positions are modified to phosphothreonine: T239 and T244. Y252 is subject to Phosphotyrosine.

It belongs to the protein kinase superfamily. Ser/Thr protein kinase family. As to quaternary structure, interacts with the Xanthomonas campestris effector XopAC/AvrAC. Expressed in stomatal guard cells of leaves.

It localises to the cell membrane. It catalyses the reaction L-seryl-[protein] + ATP = O-phospho-L-seryl-[protein] + ADP + H(+). It carries out the reaction L-threonyl-[protein] + ATP = O-phospho-L-threonyl-[protein] + ADP + H(+). In terms of biological role, possible bi-functional kinase. In vitro, it exhibits serine/threonine activity. In vivo, can phosphorylate tyrosine residues of limited substrates. May be involved in plant defense signaling. Required for full light-induced stomatal opening. This chain is Probable serine/threonine-protein kinase PBL10, found in Arabidopsis thaliana (Mouse-ear cress).